A 299-amino-acid chain; its full sequence is tRNA dimethylallyltransferase (299 aa).

11–18 (GPTAVGKT) contributes to the ATP binding site. 13–18 (TAVGKT) contributes to the substrate binding site. The interaction with substrate tRNA stretch occupies residues 36–39 (DSQQ).

It belongs to the IPP transferase family. As to quaternary structure, monomer. Mg(2+) is required as a cofactor.

It carries out the reaction adenosine(37) in tRNA + dimethylallyl diphosphate = N(6)-dimethylallyladenosine(37) in tRNA + diphosphate. Catalyzes the transfer of a dimethylallyl group onto the adenine at position 37 in tRNAs that read codons beginning with uridine, leading to the formation of N6-(dimethylallyl)adenosine (i(6)A). This is tRNA dimethylallyltransferase from Streptococcus pyogenes serotype M6 (strain ATCC BAA-946 / MGAS10394).